The sequence spans 260 residues: MAQRSIVRTKAVVLRSIDYGETSQIVTLFTQEKGKLGVMAKGARRPKSSFGATLQPMAYTQVVFYHKPSRTLQTLSESSHVQSFHRLREKLPTITVGLRIVELVDALMEEEDPQPAAFALVVRALHRLNIAEARVSNLWPYVQLQLAQILGVAPAVDRTRVEAVTGDEGLLSLADGGVYPADGTPDQPKRASRAALRAYAVCARADLDTVMRLTMSPAVRREVEALVRDFLRYQFDDAYPDRSRSVIAQIEGAKPTDRAT.

Belongs to the RecO family.

In terms of biological role, involved in DNA repair and RecF pathway recombination. In Salinibacter ruber (strain DSM 13855 / M31), this protein is DNA repair protein RecO.